The sequence spans 273 residues: Large ribosomal subunit protein uL2cy (273 aa).

2 disordered regions span residues 1–22 and 224–273; these read MAIH…DSQV and NPVD…RRRK.

This sequence belongs to the universal ribosomal protein uL2 family. As to quaternary structure, part of the 50S ribosomal subunit.

It is found in the plastid. Its subcellular location is the chloroplast. This Chloranthus spicatus (Chulantree) protein is Large ribosomal subunit protein uL2cy (rpl2-B).